The following is a 229-amino-acid chain: DNA repair protein RecO (229 aa).

It belongs to the RecO family.

Functionally, involved in DNA repair and RecF pathway recombination. The sequence is that of DNA repair protein RecO from Legionella pneumophila subsp. pneumophila (strain Philadelphia 1 / ATCC 33152 / DSM 7513).